A 351-amino-acid chain; its full sequence is Anthranilate phosphoribosyltransferase (351 aa).

5-phospho-alpha-D-ribose 1-diphosphate is bound by residues Gly-92, 95–96 (GD), Thr-100, 102–105 (NIST), 120–128 (KHGNRAASS), and Ser-132. Gly-92 serves as a coordination point for anthranilate. Ser-104 contacts Mg(2+). Asn-123 contacts anthranilate. An anthranilate-binding site is contributed by Arg-178. Residues Asp-236 and Glu-237 each contribute to the Mg(2+) site.

The protein belongs to the anthranilate phosphoribosyltransferase family. Homodimer. Requires Mg(2+) as cofactor.

It catalyses the reaction N-(5-phospho-beta-D-ribosyl)anthranilate + diphosphate = 5-phospho-alpha-D-ribose 1-diphosphate + anthranilate. Its pathway is amino-acid biosynthesis; L-tryptophan biosynthesis; L-tryptophan from chorismate: step 2/5. In terms of biological role, catalyzes the transfer of the phosphoribosyl group of 5-phosphorylribose-1-pyrophosphate (PRPP) to anthranilate to yield N-(5'-phosphoribosyl)-anthranilate (PRA). This chain is Anthranilate phosphoribosyltransferase, found in Deinococcus geothermalis (strain DSM 11300 / CIP 105573 / AG-3a).